Reading from the N-terminus, the 401-residue chain is ATP phosphoribosyltransferase regulatory subunit (401 aa).

A disordered region spans residues 373–401; it reads PGQQGGAAAQGCDRRLQQDDGGGWVTRPL. The span at 392 to 401 shows a compositional bias: gly residues; it reads DGGGWVTRPL.

The protein belongs to the class-II aminoacyl-tRNA synthetase family. HisZ subfamily. Heteromultimer composed of HisG and HisZ subunits.

Its subcellular location is the cytoplasm. The protein operates within amino-acid biosynthesis; L-histidine biosynthesis; L-histidine from 5-phospho-alpha-D-ribose 1-diphosphate: step 1/9. Functionally, required for the first step of histidine biosynthesis. May allow the feedback regulation of ATP phosphoribosyltransferase activity by histidine. The protein is ATP phosphoribosyltransferase regulatory subunit of Alkalilimnicola ehrlichii (strain ATCC BAA-1101 / DSM 17681 / MLHE-1).